We begin with the raw amino-acid sequence, 171 residues long: ATP synthase subunit b (171 aa).

The helical transmembrane segment at 19–39 (VGVGLILFIAIVIWAKAPAMI) threads the bilayer.

This sequence belongs to the ATPase B chain family. F-type ATPases have 2 components, F(1) - the catalytic core - and F(0) - the membrane proton channel. F(1) has five subunits: alpha(3), beta(3), gamma(1), delta(1), epsilon(1). F(0) has three main subunits: a(1), b(2) and c(10-14). The alpha and beta chains form an alternating ring which encloses part of the gamma chain. F(1) is attached to F(0) by a central stalk formed by the gamma and epsilon chains, while a peripheral stalk is formed by the delta and b chains.

It is found in the cell inner membrane. F(1)F(0) ATP synthase produces ATP from ADP in the presence of a proton or sodium gradient. F-type ATPases consist of two structural domains, F(1) containing the extramembraneous catalytic core and F(0) containing the membrane proton channel, linked together by a central stalk and a peripheral stalk. During catalysis, ATP synthesis in the catalytic domain of F(1) is coupled via a rotary mechanism of the central stalk subunits to proton translocation. In terms of biological role, component of the F(0) channel, it forms part of the peripheral stalk, linking F(1) to F(0). This is ATP synthase subunit b from Caulobacter sp. (strain K31).